The following is a 212-amino-acid chain: Redox-sensing transcriptional repressor Rex (212 aa).

A DNA-binding region (H-T-H motif) is located at residues 17 to 56 (LYYRIFKRFNTDGIEKASSKQIADALGIDSATVRRDFSYF). 91-96 (GCGNIG) contributes to the NAD(+) binding site.

It belongs to the transcriptional regulatory Rex family. In terms of assembly, homodimer.

The protein resides in the cytoplasm. Functionally, modulates transcription in response to changes in cellular NADH/NAD(+) redox state. The polypeptide is Redox-sensing transcriptional repressor Rex (Streptococcus agalactiae serotype III (strain NEM316)).